Reading from the N-terminus, the 445-residue chain is Proline--tRNA ligase (445 aa).

This sequence belongs to the class-II aminoacyl-tRNA synthetase family. ProS type 2 subfamily. In terms of assembly, homodimer.

It localises to the cytoplasm. The enzyme catalyses tRNA(Pro) + L-proline + ATP = L-prolyl-tRNA(Pro) + AMP + diphosphate. Functionally, catalyzes the attachment of proline to tRNA(Pro) in a two-step reaction: proline is first activated by ATP to form Pro-AMP and then transferred to the acceptor end of tRNA(Pro). This chain is Proline--tRNA ligase, found in Cereibacter sphaeroides (strain ATCC 17025 / ATH 2.4.3) (Rhodobacter sphaeroides).